Consider the following 389-residue polypeptide: Putative cyclin-F3-1 (389 aa).

Residues 1–103 form a disordered region; the sequence is MEAAAAAAAE…GAAGGSRQPV (103 aa). Residues 19–43 are compositionally biased toward low complexity; that stretch reads VEGAAVAAVAPEAAAEGPSEPNAGE.

Belongs to the cyclin family. Cyclin F subfamily.

This Oryza sativa subsp. japonica (Rice) protein is Putative cyclin-F3-1 (CYCF3-1).